Here is a 699-residue protein sequence, read N- to C-terminus: Endogenous retrovirus group K member 19 Env polyprotein (699 aa).

The interval 1 to 47 is disordered; the sequence is MNPSEMQRKAPPRRRRHRNRAPLTHKMNKMVTSEEQMKLPSTKKAEP. A signal peptide spans 1–89; it reads MNPSEMQRKA…ALMIVSMVVS (89 aa). Positions 10-20 are enriched in basic residues; the sequence is APPRRRRHRNR. The Extracellular segment spans residues 90–632; the sequence is LPMPAGAAAA…NLNPVTWVKT (543 aa). 7 N-linked (GlcNAc...) asparagine glycosylation sites follow: N100, N128, N153, N274, N355, N372, and N461. Residues 466–486 form a fusion peptide region; the sequence is FIFTLIAVIMGLIAVTATAAV. N-linked (GlcNAc...) asparagine glycans are attached at residues N507, N554, N566, and N585. The helical transmembrane segment at 633–653 threads the bilayer; it reads IGSTTIINLILILVCLFCLLL. Residues 654–699 are Cytoplasmic-facing; that stretch reads VCRCTQQLRRDSDHRERAMMTMAVLSKRKGGNVGKSKRDQIVTVSV.

Belongs to the beta type-B retroviral envelope protein family. HERV class-II K(HML-2) env subfamily. In terms of assembly, the surface (SU) and transmembrane (TM) proteins form a heterodimer. SU and TM are attached by noncovalent interactions or by a labile interchain disulfide bond. In terms of processing, specific enzymatic cleavages in vivo yield the mature SU and TM proteins.

It is found in the cell membrane. Its subcellular location is the virion. Its function is as follows. Retroviral envelope proteins mediate receptor recognition and membrane fusion during early infection. Endogenous envelope proteins may have kept, lost or modified their original function during evolution. This endogenous envelope protein has lost its original fusogenic properties. In terms of biological role, SU mediates receptor recognition. TM anchors the envelope heterodimer to the viral membrane through one transmembrane domain. The other hydrophobic domain, called fusion peptide, mediates fusion of the viral membrane with the target cell membrane. This is Endogenous retrovirus group K member 19 Env polyprotein (ERVK-19) from Homo sapiens (Human).